The following is a 308-amino-acid chain: Methionyl-tRNA formyltransferase (308 aa).

Residue 109–112 coordinates (6S)-5,6,7,8-tetrahydrofolate; the sequence is SLLP.

This sequence belongs to the Fmt family.

The catalysed reaction is L-methionyl-tRNA(fMet) + (6R)-10-formyltetrahydrofolate = N-formyl-L-methionyl-tRNA(fMet) + (6S)-5,6,7,8-tetrahydrofolate + H(+). Functionally, attaches a formyl group to the free amino group of methionyl-tRNA(fMet). The formyl group appears to play a dual role in the initiator identity of N-formylmethionyl-tRNA by promoting its recognition by IF2 and preventing the misappropriation of this tRNA by the elongation apparatus. The sequence is that of Methionyl-tRNA formyltransferase from Methylococcus capsulatus (strain ATCC 33009 / NCIMB 11132 / Bath).